The sequence spans 298 residues: ATP synthase gamma chain (298 aa).

The protein belongs to the ATPase gamma chain family. F-type ATPases have 2 components, CF(1) - the catalytic core - and CF(0) - the membrane proton channel. CF(1) has five subunits: alpha(3), beta(3), gamma(1), delta(1), epsilon(1). CF(0) has three main subunits: a, b and c.

The protein localises to the cell inner membrane. Its function is as follows. Produces ATP from ADP in the presence of a proton gradient across the membrane. The gamma chain is believed to be important in regulating ATPase activity and the flow of protons through the CF(0) complex. This is ATP synthase gamma chain from Albidiferax ferrireducens (strain ATCC BAA-621 / DSM 15236 / T118) (Rhodoferax ferrireducens).